We begin with the raw amino-acid sequence, 350 residues long: Ornithine carbamoyltransferase, mitochondrial (350 aa).

Residues Met1–Tyr30 constitute a mitochondrion transit peptide. Residues Ser86–Arg90, Arg137, and His164 contribute to the carbamoyl phosphate site. Arg137 serves as a coordination point for L-ornithine. L-ornithine contacts are provided by residues Asn195, Asp259–Ser263, His298–Pro301, and Arg326. Cys299 is a catalytic residue. Arg326 serves as a coordination point for carbamoyl phosphate.

Belongs to the aspartate/ornithine carbamoyltransferase superfamily. OTCase family. In terms of assembly, homotrimer. As to expression, liver.

The protein resides in the mitochondrion matrix. The enzyme catalyses carbamoyl phosphate + L-ornithine = L-citrulline + phosphate + H(+). It functions in the pathway nitrogen metabolism; urea cycle; L-citrulline from L-ornithine and carbamoyl phosphate: step 1/1. Functionally, OTC is necessary for the tadpoles transition from an ammonotelic, aquatic larva to a ureotelic, terrestrial adult. This is Ornithine carbamoyltransferase, mitochondrial from Aquarana catesbeiana (American bullfrog).